The chain runs to 111 residues: Natriuretic peptide TNP-b (111 aa).

An N-terminal signal peptide occupies residues 1 to 27 (MVGLSRLAGGGLLLLLLLALLPLALDG). The propeptide occupies 28–71 (KPAPLPQALPEALAGGTTALRRDVTEEQQQQLVAEESSGPAAGR). 2 disordered regions span residues 51-77 (VTEE…PKIG) and 92-111 (SGLG…PGGS). Residues cysteine 80 and cysteine 96 are joined by a disulfide bond. The propeptide occupies 107 to 111 (IPGGS).

It belongs to the natriuretic peptide family. Expressed by the venom gland.

The protein localises to the secreted. Its function is as follows. Snake venom natriuretic peptide that exhibits vasoactive and probable hypotensive activity. Is only weakly active on natriuretic peptide receptor-C (NPR3). The sequence is that of Natriuretic peptide TNP-b from Oxyuranus scutellatus scutellatus (Australian taipan).